We begin with the raw amino-acid sequence, 181 residues long: CD160 antigen (181 aa).

Residues 1–24 (MLLEPGRGCCALAILLAIVDIQSG) form the signal peptide. The region spanning 25 to 133 (GCINITSSAS…QGHFFSILFT (109 aa)) is the Ig-like V-type domain. An N-linked (GlcNAc...) asparagine glycan is attached at Asn28. 2 disulfides stabilise this stretch: Cys44–Cys112 and Cys61–Cys68. An N-linked (GlcNAc...) asparagine glycan is attached at Asn137. Ser159 is lipidated: GPI-anchor amidated serine. A propeptide spans 160–181 (SGFLQEKVWVMLVTSLVALQAL) (removed in mature form).

As to quaternary structure, homomultimer; disulfide-linked. Interacts with HLA-G. Interacts with HLA-A2-B2M in complex with an HIV-derived peptide. Interacts with TNFRSF14 (via cysteine-rich domain 1); this interaction is direct. Interacts with LCK and CD247/CD3 zeta chain. Expression is restricted to functional NK and cytotoxic T lymphocytes. Expressed in viral-specific effector memory and terminally differentiated effector memory CD8+ T cells. Expressed in memory and activated CD4+ T cell subsets (at protein level). Expressed at high levels in intraepithelial lymphocytes (at protein level). Expressed in both alpha-beta and gamma-delta CD8+ T cell subsets (at protein level). Expressed in umbilical vein endothelial cells (at protein level). Expressed in monocytes and at lower levels in B cells. Isoform 3: Expressed exclusively in activated NK cells (at protein level).

Its subcellular location is the cell membrane. The protein localises to the secreted. Receptor on immune cells capable to deliver stimulatory or inhibitory signals that regulate cell activation and differentiation. Exists as a GPI-anchored and as a transmembrane form, each likely initiating distinct signaling pathways via phosphoinositol 3-kinase in activated NK cells and via LCK and CD247/CD3 zeta chain in activated T cells. Receptor for both classical and non-classical MHC class I molecules. In the context of acute viral infection, recognizes HLA-C and triggers NK cell cytotoxic activity, likely playing a role in anti-viral innate immune response. On CD8+ T cells, binds HLA-A2-B2M in complex with a viral peptide and provides a costimulatory signal to activated/memory T cells. Upon persistent antigen stimulation, such as occurs during chronic viral infection, may progressively inhibit TCR signaling in memory CD8+ T cells, contributing to T cell exhaustion. On endothelial cells, recognizes HLA-G and controls angiogenesis in immune privileged sites. Receptor or ligand for TNF superfamily member TNFRSF14, participating in bidirectional cell-cell contact signaling between antigen presenting cells and lymphocytes. Upon ligation of TNFRSF14, provides stimulatory signal to NK cells enhancing IFNG production and anti-tumor immune response. On activated CD4+ T cells, interacts with TNFRSF14 and down-regulates CD28 costimulatory signaling, restricting memory and alloantigen-specific immune response. In the context of bacterial infection, acts as a ligand for TNFRSF14 on epithelial cells, triggering the production of antimicrobial proteins and pro-inflammatory cytokines. In terms of biological role, the soluble GPI-cleaved form, usually released by activated lymphocytes, might play an immune regulatory role by limiting lymphocyte effector functions. This chain is CD160 antigen, found in Homo sapiens (Human).